The chain runs to 388 residues: DNA ADP-ribosyl transferase-DNA ADP-ribosyl glycohydrolase fusion protein (388 aa).

The 192-residue stretch at Arg-6–Phe-197 folds into the DarT domain. Residues Tyr-10–Thr-12 and Arg-50 each bind NAD(+). Residues Gln-34–Ser-52 form an NAD(+)-binding element region. Arg-50 acts as the Proton acceptor in catalysis. The segment at Thr-107–Glu-152 is ADP-ribosylating turn-turn loop. Glu-152 is an active-site residue. One can recognise a Macro domain in the interval Phe-196–Pro-376. ADP-D-ribose is bound by residues Asp-215–Met-216, Ser-227–Asn-229, Thr-301, Gly-339–Gly-343, and Leu-371–Glu-372.

The protein in the N-terminal section; belongs to the DarT ADP-ribosyltransferase family. This sequence in the C-terminal section; belongs to the DarG ADP-ribosyl glycohydrolase family.

The catalysed reaction is an N-(ADP-alpha-D-ribosyl)-thymidine in DNA + H2O = a thymidine in DNA + ADP-D-ribose. It catalyses the reaction a thymidine in DNA + NAD(+) = an N-(ADP-alpha-D-ribosyl)-thymidine in DNA + nicotinamide + H(+). Functionally, a fusion protein of the toxic and antitoxin components of a hybrid type II/IV toxin-antitoxin (TA) system. The N-terminal domain ADP-ribosylates ssDNA on a thymidine residue, while the C-terminal domain removes the modification, neutralizing the toxic effect. The protein is DNA ADP-ribosyl transferase-DNA ADP-ribosyl glycohydrolase fusion protein of Thermosipho africanus (strain H17ap60334).